Here is a 275-residue protein sequence, read N- to C-terminus: Polyamine aminopropyltransferase (275 aa).

Residues 2-235 (ELWFTEKQTK…GLWTFTIGSK (234 aa)) enclose the PABS domain. S-methyl-5'-thioadenosine is bound at residue Gln-31. 2 residues coordinate spermidine: His-62 and Asp-86. S-methyl-5'-thioadenosine contacts are provided by residues Glu-106 and 137-138 (DG). Asp-155 (proton acceptor) is an active-site residue. Position 155–158 (155–158 (DSTE)) interacts with spermidine. Pro-162 provides a ligand contact to S-methyl-5'-thioadenosine.

Belongs to the spermidine/spermine synthase family. In terms of assembly, homodimer or homotetramer.

Its subcellular location is the cytoplasm. It catalyses the reaction S-adenosyl 3-(methylsulfanyl)propylamine + putrescine = S-methyl-5'-thioadenosine + spermidine + H(+). The protein operates within amine and polyamine biosynthesis; spermidine biosynthesis; spermidine from putrescine: step 1/1. In terms of biological role, catalyzes the irreversible transfer of a propylamine group from the amino donor S-adenosylmethioninamine (decarboxy-AdoMet) to putrescine (1,4-diaminobutane) to yield spermidine. This chain is Polyamine aminopropyltransferase, found in Bacillus cereus (strain ATCC 10987 / NRS 248).